A 327-amino-acid chain; its full sequence is Small ribosomal subunit protein RACK1z (327 aa).

WD repeat units lie at residues 13 to 44 (AHTD…ILWK), 61 to 91 (GHSH…RLWD), 103 to 133 (GHTK…KLWN), 148 to 180 (GHRD…KVWN), 192 to 222 (GHTG…LLWD), 233 to 262 (EANS…KIWD), and 293 to 323 (RKVI…RVWG).

It belongs to the WD repeat G protein beta family. Ribosomal protein RACK1 subfamily. In terms of assembly, homodimer and heterodimer with RACK1B or RACK1C. Interacts with NUDT7. Interacts with GB1, MEKK1, MKK4, MKK5, MPK3 and MPK6, but not with GPA1 or MPK4. Interacts with OFUT20. Widely expressed.

Its subcellular location is the cytoplasm. It localises to the nucleus. Its function is as follows. Major component of the RACK1 regulatory proteins that play a role in multiple signal transduction pathways. Involved in multiple hormone responses and developmental processes. MAPK cascade scaffolding protein involved in the protease IV and ArgC signaling pathway but not the flg22 pathway. The sequence is that of Small ribosomal subunit protein RACK1z from Arabidopsis thaliana (Mouse-ear cress).